We begin with the raw amino-acid sequence, 192 residues long: Imidazole glycerol phosphate synthase subunit HisH (192 aa).

The Glutamine amidotransferase type-1 domain occupies 1–192 (MIAIIDYGLG…QALKGGFIND (192 aa)). C77 acts as the Nucleophile in catalysis. Active-site residues include H169 and E171.

Heterodimer of HisH and HisF.

Its subcellular location is the cytoplasm. The enzyme catalyses 5-[(5-phospho-1-deoxy-D-ribulos-1-ylimino)methylamino]-1-(5-phospho-beta-D-ribosyl)imidazole-4-carboxamide + L-glutamine = D-erythro-1-(imidazol-4-yl)glycerol 3-phosphate + 5-amino-1-(5-phospho-beta-D-ribosyl)imidazole-4-carboxamide + L-glutamate + H(+). It carries out the reaction L-glutamine + H2O = L-glutamate + NH4(+). The protein operates within amino-acid biosynthesis; L-histidine biosynthesis; L-histidine from 5-phospho-alpha-D-ribose 1-diphosphate: step 5/9. Functionally, IGPS catalyzes the conversion of PRFAR and glutamine to IGP, AICAR and glutamate. The HisH subunit catalyzes the hydrolysis of glutamine to glutamate and ammonia as part of the synthesis of IGP and AICAR. The resulting ammonia molecule is channeled to the active site of HisF. The protein is Imidazole glycerol phosphate synthase subunit HisH of Staphylococcus epidermidis (strain ATCC 35984 / DSM 28319 / BCRC 17069 / CCUG 31568 / BM 3577 / RP62A).